We begin with the raw amino-acid sequence, 179 residues long: MKQFLDFLPLVVFFAFYKLYDIYAATTALIVATAVVLIYSWVRYRKVEKMALITFVLVAVFGGLTIFFHNDEFIKWKVTVIYALFAGALLFSQWVMKKPLIQRMLGKELSLPQQVWSRLNLAWAVFFILCGLANIYIAFWLPQNIWVNFKVFGLTALTLVFTLLSGIYIYRHMPQDDHH.

Transmembrane regions (helical) follow at residues 22-42 (IYAA…YSWV), 50-70 (MALI…FFHN), 76-96 (WKVT…QWVM), 121-141 (LAWA…AFWL), and 149-169 (FKVF…GIYI).

It belongs to the YciB family.

Its subcellular location is the cell inner membrane. Plays a role in cell envelope biogenesis, maintenance of cell envelope integrity and membrane homeostasis. The protein is Inner membrane-spanning protein YciB of Klebsiella pneumoniae subsp. pneumoniae (strain ATCC 700721 / MGH 78578).